The primary structure comprises 37 residues: Photosystem II reaction center protein K (37 aa).

At 1-15 the chain is on the lumenal side; sequence KLPEAYAIFDPLVDV. Residues 16–30 traverse the membrane as a helical segment; the sequence is LPVIPVLFFALAFVV. Residues 31–37 lie on the Cytoplasmic side of the membrane; sequence QAAVGFR.

It belongs to the PsbK family. PSII is composed of 1 copy each of membrane proteins PsbA, PsbB, PsbC, PsbD, PsbE, PsbF, PsbH, PsbI, PsbJ, PsbK, PsbL, PsbM, PsbT, PsbX, PsbY, PsbZ, Psb30/Ycf12, peripheral proteins PsbO, CyanoQ (PsbQ), PsbU, PsbV and a large number of cofactors. It forms dimeric complexes. PSII binds multiple chlorophylls, carotenoids and specific lipids. serves as cofactor.

It is found in the cellular thylakoid membrane. Its function is as follows. One of the components of the core complex of photosystem II (PSII). PSII is a light-driven water:plastoquinone oxidoreductase that uses light energy to abstract electrons from H(2)O, generating O(2) and a proton gradient subsequently used for ATP formation. It consists of a core antenna complex that captures photons, and an electron transfer chain that converts photonic excitation into a charge separation. This is Photosystem II reaction center protein K from Thermostichus vulcanus (Synechococcus vulcanus).